The sequence spans 116 residues: Large ribosomal subunit protein uL18 (116 aa).

Belongs to the universal ribosomal protein uL18 family. In terms of assembly, part of the 50S ribosomal subunit; part of the 5S rRNA/L5/L18/L25 subcomplex. Contacts the 5S and 23S rRNAs.

This is one of the proteins that bind and probably mediate the attachment of the 5S RNA into the large ribosomal subunit, where it forms part of the central protuberance. This chain is Large ribosomal subunit protein uL18, found in Pseudomonas fluorescens (strain SBW25).